We begin with the raw amino-acid sequence, 385 residues long: Acetylornithine aminotransferase (385 aa).

Pyridoxal 5'-phosphate-binding positions include 95 to 96 (GA) and F122. A N(2)-acetyl-L-ornithine-binding site is contributed by R125. 208–211 (DEIQ) is a binding site for pyridoxal 5'-phosphate. N6-(pyridoxal phosphate)lysine is present on K237. T265 lines the N(2)-acetyl-L-ornithine pocket. Residue T266 participates in pyridoxal 5'-phosphate binding.

The protein belongs to the class-III pyridoxal-phosphate-dependent aminotransferase family. ArgD subfamily. In terms of assembly, homodimer. It depends on pyridoxal 5'-phosphate as a cofactor.

It is found in the cytoplasm. It carries out the reaction N(2)-acetyl-L-ornithine + 2-oxoglutarate = N-acetyl-L-glutamate 5-semialdehyde + L-glutamate. It functions in the pathway amino-acid biosynthesis; L-arginine biosynthesis; N(2)-acetyl-L-ornithine from L-glutamate: step 4/4. This chain is Acetylornithine aminotransferase, found in Bacillus subtilis (strain 168).